The following is a 475-amino-acid chain: Proton-coupled amino acid transporter 1 (475 aa).

The span at 1–15 shows a compositional bias: basic and acidic residues; the sequence is MSTQRLRNEDYHDYS. The disordered stretch occupies residues 1–32; sequence MSTQRLRNEDYHDYSSTDVSPEESPSEGLGSF. Residues 1–50 are Cytoplasmic-facing; the sequence is MSTQRLRNEDYHDYSSTDVSPEESPSEGLGSFSPGSYQRLGENSSMTWFQ. Residues 51–71 traverse the membrane as a helical segment; the sequence is TLIHLLKGNIGTGLLGLPLAV. The Extracellular segment spans residues 72–77; that stretch reads KNAGLL. A helical membrane pass occupies residues 78–98; the sequence is LGPLSLLVIGIVAVHCMGILV. The Cytoplasmic portion of the chain corresponds to 99-140; that stretch reads KCAHHLCRRLNKPFLDYGDTVMYGLECSPSTWIRNHSHWGRR. Residues 141–161 form a helical membrane-spanning segment; the sequence is IVDFFLVVTQLGFCCVYFVFL. Residues 162-189 lie on the Extracellular side of the membrane; that stretch reads ADNFKQVIEAANGTTTNCNNNETVILTP. N-linked (GlcNAc...) asparagine glycans are attached at residues N173 and N182. A disulfide bridge links C179 with C328. The helical transmembrane segment at 190 to 210 threads the bilayer; sequence TMDSRLYMLTFLPFLVLLSFI. Residues 211-214 lie on the Cytoplasmic side of the membrane; it reads RNLR. A helical membrane pass occupies residues 215–235; it reads ILSIFSLLANISMFVSLIMIY. The Extracellular portion of the chain corresponds to 236–256; sequence QFIVQRIPDPSHLPLVAPWKT. Residues 257–277 form a helical membrane-spanning segment; it reads YPLFFGTAIFAFEGIGVVLPL. Residues 278-288 lie on the Cytoplasmic side of the membrane; the sequence is ENKMKDSQKFP. A helical membrane pass occupies residues 289–309; that stretch reads LILYLGMAIITVLYISLGSLG. Residues 310 to 341 are Extracellular-facing; it reads YLQFGADIKGSITLNLPNCWLYQSVKLLYSIG. The helical transmembrane segment at 342 to 362 threads the bilayer; it reads IFFTYALQFYVAAEIIIPAIV. Residues 363–371 are Cytoplasmic-facing; that stretch reads SRVPERFEL. Residues 372–392 traverse the membrane as a helical segment; the sequence is VVDLSARTAMVCVTCVLAVLI. Residues 393 to 396 are Extracellular-facing; the sequence is PRLD. The helical transmembrane segment at 397–417 threads the bilayer; sequence LVISLVGSVSSSALALIIPPL. Residues 418–438 are Cytoplasmic-facing; that stretch reads LEVTTYYGEGISPLTITKDAL. Residues 439–459 form a helical membrane-spanning segment; it reads ISILGFVGFVVGTYESLWELI. At 460–475 the chain is on the extracellular side; sequence QPSHSDSSTNSTSAFI. A glycan (N-linked (GlcNAc...) asparagine) is linked at N469.

It belongs to the amino acid/polyamine transporter 2 family. As to expression, widely expressed and predominantly expressed in brain. Within the brain, expression restricted to neurons and not detected in glial cells. Abundant in regions rich in neurons using glutamate and GABA such as Purkinje cells in the cerebellum and pyramidal cells in the hippocampus.

It is found in the cell membrane. Its subcellular location is the apical cell membrane. It localises to the lysosome membrane. The catalysed reaction is glycine(in) + H(+)(in) = glycine(out) + H(+)(out). The enzyme catalyses L-proline(out) + H(+)(out) = L-proline(in) + H(+)(in). It carries out the reaction D-proline(out) + H(+)(out) = D-proline(in) + H(+)(in). It catalyses the reaction L-alanine(in) + H(+)(in) = L-alanine(out) + H(+)(out). The catalysed reaction is D-alanine(in) + H(+)(in) = D-alanine(out) + H(+)(out). The enzyme catalyses L-serine(in) + H(+)(in) = L-serine(out) + H(+)(out). It carries out the reaction D-serine(out) + H(+)(out) = D-serine(in) + H(+)(in). It catalyses the reaction 4-aminobutanoate(in) + H(+)(in) = 4-aminobutanoate(out) + H(+)(out). The catalysed reaction is beta-alanine(in) + H(+)(in) = beta-alanine(out) + H(+)(out). Electrogenic proton/amino acid symporter with selectivity for small apolar L-amino acids, their D-enantiomers and selected amino acid derivatives such as 4-aminobutanoate/GABA. May be involved in the efflux from the lysosomal compartment of neutral amino acids resulting from proteolysis. May play a role in specifying sites for exocytosis in neurons. The protein is Proton-coupled amino acid transporter 1 of Rattus norvegicus (Rat).